Consider the following 308-residue polypeptide: Peptidyl-prolyl cis-trans isomerase CYP8 (308 aa).

Residues 56-215 enclose the PPIase cyclophilin-type domain; that stretch reads FTDPESSEEA…QPITIGYISS (160 aa).

The catalysed reaction is [protein]-peptidylproline (omega=180) = [protein]-peptidylproline (omega=0). Its function is as follows. PPIases accelerate the folding of proteins. It catalyzes the cis-trans isomerization of proline imidic peptide bonds in oligopeptides. This is Peptidyl-prolyl cis-trans isomerase CYP8 (CPR8) from Saccharomyces cerevisiae (strain ATCC 204508 / S288c) (Baker's yeast).